A 267-amino-acid polypeptide reads, in one-letter code: MKAEYADYLRTEMLPTIWCAGCPNGIVLASFIRAVKRGFERDKTVVVSGIGCSGRITQYLDFETVHTTHGRALAFATGIKLAKPELNVVVFMGDGDAVAIGGNHFIHACRRNIDLTAVVINNSLYGMTGGQLAPTTPEGAKTKTSPYGNVERPFDIAKLAIAAGASYVARFTAYQPRWIEKAIFEAMQHHGFSVVEVVTGCPTHQRIKPADLLKHLKENFRRRDNVSLDEIQPTDIGVFKKEVMEEFCEKIEKLRMYVRKGENKENV.

As to quaternary structure, heterotetramer of the KorA, KorB, KorC and KorD subunits.

The catalysed reaction is 2 oxidized [2Fe-2S]-[ferredoxin] + 2-oxoglutarate + CoA = succinyl-CoA + 2 reduced [2Fe-2S]-[ferredoxin] + CO2 + H(+). The sequence is that of 2-oxoglutarate synthase subunit KorB (korB) from Archaeoglobus fulgidus (strain ATCC 49558 / DSM 4304 / JCM 9628 / NBRC 100126 / VC-16).